Here is a 188-residue protein sequence, read N- to C-terminus: Pyridoxal 5'-phosphate synthase subunit PdxT (188 aa).

Gly47–Ser49 contributes to the L-glutamine binding site. The Nucleophile role is filled by Cys79. L-glutamine contacts are provided by residues Arg105 and Ile134–Arg135. Active-site charge relay system residues include His170 and Glu172.

This sequence belongs to the glutaminase PdxT/SNO family. In terms of assembly, in the presence of PdxS, forms a dodecamer of heterodimers. Only shows activity in the heterodimer.

The enzyme catalyses aldehydo-D-ribose 5-phosphate + D-glyceraldehyde 3-phosphate + L-glutamine = pyridoxal 5'-phosphate + L-glutamate + phosphate + 3 H2O + H(+). The catalysed reaction is L-glutamine + H2O = L-glutamate + NH4(+). It functions in the pathway cofactor biosynthesis; pyridoxal 5'-phosphate biosynthesis. Functionally, catalyzes the hydrolysis of glutamine to glutamate and ammonia as part of the biosynthesis of pyridoxal 5'-phosphate. The resulting ammonia molecule is channeled to the active site of PdxS. This is Pyridoxal 5'-phosphate synthase subunit PdxT from Listeria monocytogenes serotype 4a (strain HCC23).